Here is a 700-residue protein sequence, read N- to C-terminus: MSQYKRTLVTTALPYANGPVHLGHLAGVYLPADIYVRFKRLKGEDVIHIGGSDEHGVPITLTADKEGVSPQVVVDRYHNRNSEAFAKCGISFDHYGRTSSPVHHETAQEFFLDIEKKGIFTKKVEKQFYDEESRHFLSDRYVTGTCPVCGNPDANGDQCEKCGTYLSANELINPKSKLTGKTPILKETLHWYFPLGRFQKKLEDFIEGHAKTWRQNVINYSRTWLRQGLGDRAITRDLPWGVKVPLEGEEAKDKVLYVWFDAVLGYISSTKEWAAKQGQPDLWKTYWQSPETRLIHFIGKDNVVFHALMFPAILMAKNENADAQYVLVDNVPASEFMNFEGKKFSKSRNYAVYLHEFLEKFPADTLRYSLAINYPESRDTDFSWKDFQNRTNGELADTLGNFVKRAVDFTNSKFQGEVPAECTIEDWNALGEGWHGGFKKYEEALENFHIREACFTAMDFARFANRYLTESEPWKVIKTEPEKAAKIMAMALNLCETLATVFAPILPETSAKIFDMLGVSEAAQAKVGENLFEKVKAPQLAKGHKLSGKSEILFRKIEDADIQPELDKIAAMLAALEQKEAEKATENFEPIKPTITFDEFEKIDLRVAKVLECERVPKTDKLLRLKVQLGTETRQVLAGLAKYYTPEALLGKNVVMVANLAPRKMRGMESQGMVLAVEDAAGCLQALSPEGDSIVGKPVK.

A 'HIGH' region motif is present at residues 14–24 (PYANGPVHLGH). Zn(2+) contacts are provided by cysteine 146, cysteine 149, cysteine 159, and cysteine 162. The short motif at 343-347 (KFSKS) is the 'KMSKS' region element. Residue lysine 346 coordinates ATP. The tRNA-binding domain maps to 599-700 (EFEKIDLRVA…GDSIVGKPVK (102 aa)).

This sequence belongs to the class-I aminoacyl-tRNA synthetase family. MetG type 1 subfamily. Homodimer. The cofactor is Zn(2+).

The protein resides in the cytoplasm. It carries out the reaction tRNA(Met) + L-methionine + ATP = L-methionyl-tRNA(Met) + AMP + diphosphate. Is required not only for elongation of protein synthesis but also for the initiation of all mRNA translation through initiator tRNA(fMet) aminoacylation. This is Methionine--tRNA ligase from Chloroherpeton thalassium (strain ATCC 35110 / GB-78).